A 293-amino-acid chain; its full sequence is MDTELLKTFLEVSRTRHFGRAAESLYLTQSAVSFRIRQLENQLGANLFTRHRNNIRLTPAGERLLPYAETLMSTWQLAKKEVAHSLQHTELSIGATASLWEAYLTPWLQQLYKQRETLRLEARIALRQSLVKQLHERQLDLLITTEPPKMDELASLLLGHFSLRLFSSIPFELPEKTDDGTEHKNANEAPYIKLEWGADFHQQESRLLNSEQMPVLTTTSAHLTRQLLDTTGGCAFLPEHWQKEYPELVVNADIPPIVRPLYAVWLQNSDQQTLIRQLLKTPMNNAAQSAIRD.

In terms of domain architecture, HTH lysR-type spans 1–58; the sequence is MDTELLKTFLEVSRTRHFGRAAESLYLTQSAVSFRIRQLENQLGANLFTRHRNNIRLT. Positions 18 to 37 form a DNA-binding region, H-T-H motif; that stretch reads FGRAAESLYLTQSAVSFRIR.

It belongs to the LysR transcriptional regulatory family.

Negatively regulates the transcription of the flagellar master operon flhDC by binding to the upstream region of the operon. In Yersinia enterocolitica serotype O:8 / biotype 1B (strain NCTC 13174 / 8081), this protein is HTH-type transcriptional regulator HdfR.